The sequence spans 116 residues: MTVKKVTRLRRARKARLKMHELEVVRLCVHRSSQHIYAQVISADGSKVLASASTLDKELRDGATGNIDAATKVGKLVAERAKAAGVSQVAFDRSGFKYHGRVKALADAAREGGLEF.

This sequence belongs to the universal ribosomal protein uL18 family. As to quaternary structure, part of the 50S ribosomal subunit; part of the 5S rRNA/L5/L18/L25 subcomplex. Contacts the 5S and 23S rRNAs.

In terms of biological role, this is one of the proteins that bind and probably mediate the attachment of the 5S RNA into the large ribosomal subunit, where it forms part of the central protuberance. In Pseudomonas syringae pv. tomato (strain ATCC BAA-871 / DC3000), this protein is Large ribosomal subunit protein uL18.